Here is a 350-residue protein sequence, read N- to C-terminus: Small ribosomal subunit biogenesis GTPase RsgA (350 aa).

A compositionally biased stretch (polar residues) spans 1–17 (MSKNKLSKGQQRRVQAN). The tract at residues 1-35 (MSKNKLSKGQQRRVQANHQRRLRTDRKPELDDSQL) is disordered. Residues 103 to 273 (TSVLTRPDLY…VIDSPGVREF (171 aa)) enclose the CP-type G domain. GTP is bound by residues 159–162 (NKID) and 213–221 (GQSGVGKSS). Zn(2+) contacts are provided by Cys297, Cys302, His304, and Cys310.

The protein belongs to the TRAFAC class YlqF/YawG GTPase family. RsgA subfamily. Monomer. Associates with 30S ribosomal subunit, binds 16S rRNA. It depends on Zn(2+) as a cofactor.

Its subcellular location is the cytoplasm. One of several proteins that assist in the late maturation steps of the functional core of the 30S ribosomal subunit. Helps release RbfA from mature subunits. May play a role in the assembly of ribosomal proteins into the subunit. Circularly permuted GTPase that catalyzes slow GTP hydrolysis, GTPase activity is stimulated by the 30S ribosomal subunit. This is Small ribosomal subunit biogenesis GTPase RsgA from Yersinia enterocolitica serotype O:8 / biotype 1B (strain NCTC 13174 / 8081).